A 398-amino-acid chain; its full sequence is Succinate--CoA ligase [ADP-forming] subunit beta (398 aa).

In terms of domain architecture, ATP-grasp spans 9 to 253 (KELLKSYGVA…EAEEDPKELE (245 aa)). Residues Lys-46, 53–55 (GRG), Glu-108, Cys-111, and Glu-116 contribute to the ATP site. Positions 208 and 222 each coordinate Mg(2+). Substrate is bound by residues Asn-273 and 330-332 (GIM).

This sequence belongs to the succinate/malate CoA ligase beta subunit family. In terms of assembly, heterotetramer of two alpha and two beta subunits. Mg(2+) is required as a cofactor.

The enzyme catalyses succinate + ATP + CoA = succinyl-CoA + ADP + phosphate. The catalysed reaction is GTP + succinate + CoA = succinyl-CoA + GDP + phosphate. It participates in carbohydrate metabolism; tricarboxylic acid cycle; succinate from succinyl-CoA (ligase route): step 1/1. Functionally, succinyl-CoA synthetase functions in the citric acid cycle (TCA), coupling the hydrolysis of succinyl-CoA to the synthesis of either ATP or GTP and thus represents the only step of substrate-level phosphorylation in the TCA. The beta subunit provides nucleotide specificity of the enzyme and binds the substrate succinate, while the binding sites for coenzyme A and phosphate are found in the alpha subunit. In Acidiphilium cryptum (strain JF-5), this protein is Succinate--CoA ligase [ADP-forming] subunit beta.